Consider the following 232-residue polypeptide: Biosynthetic peptidoglycan transglycosylase (232 aa).

A helical membrane pass occupies residues tyrosine 12–proline 31.

This sequence belongs to the glycosyltransferase 51 family.

It is found in the cell inner membrane. It catalyses the reaction [GlcNAc-(1-&gt;4)-Mur2Ac(oyl-L-Ala-gamma-D-Glu-L-Lys-D-Ala-D-Ala)](n)-di-trans,octa-cis-undecaprenyl diphosphate + beta-D-GlcNAc-(1-&gt;4)-Mur2Ac(oyl-L-Ala-gamma-D-Glu-L-Lys-D-Ala-D-Ala)-di-trans,octa-cis-undecaprenyl diphosphate = [GlcNAc-(1-&gt;4)-Mur2Ac(oyl-L-Ala-gamma-D-Glu-L-Lys-D-Ala-D-Ala)](n+1)-di-trans,octa-cis-undecaprenyl diphosphate + di-trans,octa-cis-undecaprenyl diphosphate + H(+). It functions in the pathway cell wall biogenesis; peptidoglycan biosynthesis. In terms of biological role, peptidoglycan polymerase that catalyzes glycan chain elongation from lipid-linked precursors. This Pseudomonas aeruginosa (strain ATCC 15692 / DSM 22644 / CIP 104116 / JCM 14847 / LMG 12228 / 1C / PRS 101 / PAO1) protein is Biosynthetic peptidoglycan transglycosylase.